The following is a 165-amino-acid chain: MDLSQLTPRRPYLLRAFYEWLLDNQLTPHLVVDVTLPGVQVPMEYARDGQIVLNIAPRAVGNLELANDEVRFNARFGGIPRQVSVPLAAVLAIYARENGAGTMFEPEAAYDEDTSIMNDEEASADNETVMSVIDGDKPDHDDDTHPDDEPPQPPRGGRPALRVVK.

The segment at 119–165 (DEEASADNETVMSVIDGDKPDHDDDTHPDDEPPQPPRGGRPALRVVK) is disordered. Positions 134-143 (DGDKPDHDDD) are enriched in basic and acidic residues.

It belongs to the SspB family.

In terms of biological role, seems to act in concert with SspA in the regulation of several proteins during exponential and stationary-phase growth. The exact function of SspB is not yet known. In Escherichia coli O157:H7, this protein is Stringent starvation protein B (sspB).